The primary structure comprises 81 residues: CLAVATA3/ESR (CLE)-related protein 6 (81 aa).

An N-terminal signal peptide occupies residues 1 to 26 (MANLILKQSLIILLIIYSTPILSSQA). A hydroxyproline mark is found at Pro-73 and Pro-76. Pro-76 carries O-linked (Ara...) hydroxyproline glycosylation.

Belongs to the CLV3/ESR signal peptide family. The O-glycosylation (arabinosylation) of the hydroxyproline Pro-76 enhances binding affinity of the CLE6p peptide for its receptor. Mostly expressed in roots, seedlings, stems and flowers, and, to a lower extent, in apex and siliques.

It is found in the secreted. It localises to the extracellular space. In terms of biological role, extracellular signal peptide that regulates cell fate. This chain is CLAVATA3/ESR (CLE)-related protein 6, found in Arabidopsis thaliana (Mouse-ear cress).